The following is a 327-amino-acid chain: Malate dehydrogenase (327 aa).

11–17 (GAAGQIA) is a binding site for NAD(+). Residues Arg92 and Arg98 each contribute to the substrate site. Residues Asn105, Gln112, and 129 to 131 (VGN) each bind NAD(+). 2 residues coordinate substrate: Asn131 and Arg162. The Proton acceptor role is filled by His187.

Belongs to the LDH/MDH superfamily. MDH type 2 family.

The enzyme catalyses (S)-malate + NAD(+) = oxaloacetate + NADH + H(+). Functionally, catalyzes the reversible oxidation of malate to oxaloacetate. The chain is Malate dehydrogenase from Nitrosospira multiformis (strain ATCC 25196 / NCIMB 11849 / C 71).